Reading from the N-terminus, the 464-residue chain is MLATDSDPIVAIATAAGRGGIGVVRVSFGRGGEAAALPLIDALCGQKLAPRHASYVPFLDEHGAPLDRGIALYFPAPHSYTGEHVLELQGHGGPIVMQLLLQRCLDAGRGFGLRLAEPGEFTRRAFLNDKLDLAQAEAVADLIEASTEAAARSAGRSLDGAFSRQIHALVDDVITLRMLVEATLDFPEEEIDFLEAADARGKLAKIRAQLAHVLGDARQGALLREGLSVVLAGQPNVGKSSLLNALAGAELAIVTPIAGTTRDKVAQTIQVEGIPLHIIDTAGLRETEDEVERIGIARTWSEIERADVVLHLLDSRNGMTADDETIAARFPGGVPVVRVLNKTDLTGVAACVEHPAAEGDLTEVHLSAKRGDGIDMLRAELLRIAGWQAGAEGVYLARERHLIALRAAQEHLAQAADHAEQRAQSLDLFAEELRLAQEQLNAITGEFTSDDLLGVIFSRFCIGK.

Residues arginine 25, glutamate 87, and lysine 130 each coordinate (6S)-5-formyl-5,6,7,8-tetrahydrofolate. The TrmE-type G domain occupies 226 to 386; it reads GLSVVLAGQP…LRAELLRIAG (161 aa). Residue asparagine 236 participates in K(+) binding. GTP-binding positions include 236 to 241, 255 to 261, and 280 to 283; these read NVGKSS, TPIAGTT, and DTAG. Serine 240 contributes to the Mg(2+) binding site. The K(+) site is built by threonine 255, isoleucine 257, and threonine 260. Threonine 261 lines the Mg(2+) pocket. Position 464 (lysine 464) interacts with (6S)-5-formyl-5,6,7,8-tetrahydrofolate.

This sequence belongs to the TRAFAC class TrmE-Era-EngA-EngB-Septin-like GTPase superfamily. TrmE GTPase family. In terms of assembly, homodimer. Heterotetramer of two MnmE and two MnmG subunits. The cofactor is K(+).

The protein localises to the cytoplasm. In terms of biological role, exhibits a very high intrinsic GTPase hydrolysis rate. Involved in the addition of a carboxymethylaminomethyl (cmnm) group at the wobble position (U34) of certain tRNAs, forming tRNA-cmnm(5)s(2)U34. In Burkholderia lata (strain ATCC 17760 / DSM 23089 / LMG 22485 / NCIMB 9086 / R18194 / 383), this protein is tRNA modification GTPase MnmE.